The following is a 139-amino-acid chain: UPF0216 protein MJ1224 (139 aa).

This sequence belongs to the UPF0216 family.

The sequence is that of UPF0216 protein MJ1224 from Methanocaldococcus jannaschii (strain ATCC 43067 / DSM 2661 / JAL-1 / JCM 10045 / NBRC 100440) (Methanococcus jannaschii).